Consider the following 235-residue polypeptide: Non-structural maintenance of chromosomes element 1 homolog (235 aa).

An RING-type; atypical zinc finger spans residues 181–225 (IKNCTLCKCLVLWDIRCGSCNIQYHRGCIQTYLQRRDICPSCGNL). T185 carries the post-translational modification Phosphothreonine.

This sequence belongs to the NSE1 family. As to quaternary structure, component of the Smc5-Smc6 complex which consists at least of Smc5, Smc6, Nse1, Nse2, Nse4 and MAGE. Nse1, Nse4 and MAGE probably form a subcomplex that bridges the head domains of the Smc5-Smc6 heterodimer. Interacts with MAGE and Nse4.

Its subcellular location is the nucleus. It catalyses the reaction S-ubiquitinyl-[E2 ubiquitin-conjugating enzyme]-L-cysteine + [acceptor protein]-L-lysine = [E2 ubiquitin-conjugating enzyme]-L-cysteine + N(6)-ubiquitinyl-[acceptor protein]-L-lysine.. Its function is as follows. Component of the SMC5-SMC6 complex, a complex involved in repair of DNA double-strand breaks by homologous recombination. The complex may promote sister chromatid homologous recombination by recruiting the SMC1-SMC3 cohesin complex to double-strand breaks. The polypeptide is Non-structural maintenance of chromosomes element 1 homolog (Drosophila melanogaster (Fruit fly)).